Reading from the N-terminus, the 555-residue chain is Inorganic phosphate transporter 1-11 (555 aa).

At 1–28 (MADADGGSNLAVLDALDSARTQMYHMKA) the chain is on the cytoplasmic side. Residues 29–49 (IVIAGMGFFTDAYDLFCISTV) form a helical membrane-spanning segment. Residues 50 to 77 (SKLLGRLYYQPDGSTDSKPGALSKTANN) lie on the Extracellular side of the membrane. Residues 78-98 (MVIGVALVGTLMGQLVFGYFG) traverse the membrane as a helical segment. Residues 99-105 (DKLGRKR) lie on the Cytoplasmic side of the membrane. The chain crosses the membrane as a helical span at residues 106-126 (VYGVTLILMAACAIGSGLSFG). At 127–130 (SSRK) the chain is on the extracellular side. A helical membrane pass occupies residues 131–151 (AVIGTLCFFRFWLGFGIGGDY). Topologically, residues 152–167 (PLSATIMSEYSNKKTR) are cytoplasmic. A helical membrane pass occupies residues 168-188 (GAFIAAVFAMQGVGIIFAGLV). The Extracellular portion of the chain corresponds to 189 to 216 (SMIVSSIFLTYNKAPSYKGNHDLSRQMP). Residues 217–237 (AADYVWRIVLMIGAFPALATF) form a helical membrane-spanning segment. Over 238 to 298 (YWRMKMPETA…PLLSMEFARR (61 aa)) the chain is Cytoplasmic. The chain crosses the membrane as a helical span at residues 299–319 (HGLHLIGTTTTWFLLDIAFYS). Over 320–351 (QNLTQKDIFPAMGLISGAAEVNALTEMFQISK) the chain is Extracellular. A helical membrane pass occupies residues 352–372 (ASFLVALLGTFPGYWVTVALI). Over 373–377 (DKMGR) the chain is Cytoplasmic. Residues 378–398 (YMIQLIGFFMMSMFMLAMGIL) form a helical membrane-spanning segment. At 399-408 (YDYLKTHHFL) the chain is on the extracellular side. A helical membrane pass occupies residues 409–436 (FGLLYALTFFFANFGPNSTTFVLPAELF). The Cytoplasmic portion of the chain corresponds to 437-442 (PTRVRS). A helical transmembrane segment spans residues 443 to 463 (TCHAISAAAGKAGAIVAAFGI). Topologically, residues 464–477 (QKLTYNSQVKSIKK) are extracellular. The helical transmembrane segment at 478 to 498 (ALIILSITNMLGFFFTFLVPE) threads the bilayer. The Cytoplasmic segment spans residues 499–555 (TMGRSLEEISGEDGNTGAGGGGAPAAANAGVGVSASDVSRDEKFPASSTEWQTSMHA). Positions 506-555 (EISGEDGNTGAGGGGAPAAANAGVGVSASDVSRDEKFPASSTEWQTSMHA) are disordered. A compositionally biased stretch (gly residues) spans 512–521 (GNTGAGGGGA). Residues 522–535 (PAAANAGVGVSASD) are compositionally biased toward low complexity. The span at 544–555 (ASSTEWQTSMHA) shows a compositional bias: polar residues.

It belongs to the major facilitator superfamily. Phosphate:H(+) symporter (TC 2.A.1.9) family.

It localises to the membrane. Symbiosis-specific regulated inorganic phosphate (Pi) transporter. Probably involved in symbiosis-mediated Pi uptake in roots colonized by myccorhizal fungi. The protein is Inorganic phosphate transporter 1-11 (PHT1-11) of Oryza sativa subsp. japonica (Rice).